A 417-amino-acid chain; its full sequence is Calreticulin (417 aa).

Positions 1–17 (MLLSVPLLLGLLGLAVA) are cleaved as a signal peptide. The tract at residues 18–197 (EPAVYFKEQF…NSQVESGSLE (180 aa)) is N-domain. Gln-26 contributes to the Ca(2+) binding site. Residue Lys-48 is modified to N6-acetyllysine. Ca(2+) is bound by residues Lys-62 and Lys-64. The residue at position 64 (Lys-64) is an N6-(2-hydroxyisobutyryl)lysine. Residues Cys-105 and Cys-137 are joined by a disulfide bond. An alpha-D-glucoside contacts are provided by Tyr-109, Lys-111, Tyr-128, and Asp-135. Lys-159 is subject to N6-acetyllysine. A 1-1 repeat occupies 191–202 (VESGSLEDDWDF). The 4 X approximate repeats stretch occupies residues 191-255 (VESGSLEDDW…DAKKPEDWDE (65 aa)). The disordered stretch occupies residues 193-278 (SGSLEDDWDF…PEYKGEWKPR (86 aa)). Residues 198–308 (DDWDFLPPKK…YSPDPSIYAY (111 aa)) are P-domain. A compositionally biased stretch (basic and acidic residues) spans 207–251 (KIKDPDASKPEDWDERAKIDDPTDSKPEDWDKPEHIPDPDAKKPE). At Lys-209 the chain carries N6-acetyllysine. 6 consecutive repeat copies span residues 210–221 (DPDASKPEDWDE), 227–238 (DPTDSKPEDWDK), 244–255 (DPDAKKPEDWDE), 259–269 (GEWEPPVIQNP), 273–283 (GEWKPRQIDNP), and 287–297 (GTWIHPEIDNP). An interaction with PPIB region spans residues 237–270 (DKPEHIPDPDAKKPEDWDEEMDGEWEPPVIQNPE). The segment covering 252-261 (DWDEEMDGEW) has biased composition (acidic residues). Residues 259 to 297 (GEWEPPVIQNPEYKGEWKPRQIDNPDYKGTWIHPEIDNP) form a 3 X approximate repeats region. Residues 309–417 (DNFGVLGLDL…DVPGQAKDEL (109 aa)) form a C-domain region. Asp-317 provides a ligand contact to an alpha-D-glucoside. Asp-328 is a Ca(2+) binding site. Residue Asn-344 is glycosylated (N-linked (GlcNAc...) asparagine). The interval 350-417 (TKAAEKQMKD…DVPGQAKDEL (68 aa)) is disordered. Residues 352–379 (AAEKQMKDKQDEEQRLKEEEEDKKRKEE) show a composition bias toward basic and acidic residues. Acidic residues predominate over residues 380–409 (EEAEDKEDDEDKDEDEEDEEDKEEDEEEDV). The Prevents secretion from ER motif lies at 414–417 (KDEL).

It belongs to the calreticulin family. Monomer. Component of an EIF2 complex at least composed of CELF1/CUGBP1, CALR, CALR3, EIF2S1, EIF2S2, HSP90B1 and HSPA5. Interacts with PDIA3/ERp57 and SPACA9. Interacts with TRIM21. Interacts with NR3C1. Interacts with PPIB. Interacts (via P-domain) with PDIA5. Interacts with GABARAP. Interacts with HLA-E-B2M and HLA-G-B2M complexes. Interacts with HLA-F. Interacts with CLCC1.

It is found in the endoplasmic reticulum lumen. The protein localises to the cytoplasm. Its subcellular location is the cytosol. It localises to the secreted. The protein resides in the extracellular space. It is found in the extracellular matrix. The protein localises to the cell surface. Its subcellular location is the sarcoplasmic reticulum lumen. It localises to the cytoplasmic vesicle. The protein resides in the secretory vesicle. It is found in the cortical granule. The protein localises to the cytolytic granule. Functionally, calcium-binding chaperone that promotes folding, oligomeric assembly and quality control in the endoplasmic reticulum (ER) via the calreticulin/calnexin cycle. This lectin interacts transiently with almost all of the monoglucosylated glycoproteins that are synthesized in the ER. Interacts with the DNA-binding domain of NR3C1 and mediates its nuclear export. Involved in maternal gene expression regulation. May participate in oocyte maturation via the regulation of calcium homeostasis. Present in the cortical granules of non-activated oocytes, is exocytosed during the cortical reaction in response to oocyte activation and might participate in the block to polyspermy. This chain is Calreticulin, found in Homo sapiens (Human).